The following is a 175-amino-acid chain: FMRFamide-like neuropeptides 1 (175 aa).

The first 21 residues, 1-21, serve as a signal peptide directing secretion; the sequence is MTLLYQVGLLLLVAATYKVSA. The propeptide occupies 22-68; the sequence is ECCTPGATSDFCTVFSMLSTMEQNEVMNFIGENCDGDAEVALQKMEK. Tyr76 carries the post-translational modification Tyrosine amide. Positions 79 to 86 are excised as a propeptide; the sequence is SAAVKSLG. A phenylalanine amide mark is found at Phe98, Phe108, Phe120, Phe130, Phe142, and Phe154. The propeptide occupies 157–165; the sequence is SFDNFDRES. Phe173 bears the Phenylalanine amide mark.

Belongs to the FARP (FMRFamide related peptide) family. Post-translationally, may be processed by convertase egl-3. As to expression, each flp gene is expressed in a distinct set of neurons. Flp-1 is expressed in the AVA interneurons, the M5 cholinergic pharyngeal motoneurons, and the AIA, AIY, AVE, AVK, RIG and RMG neurons.

It localises to the secreted. Together with flp-18, plays a homeostatic role by acting on the GABAergic neural transmission at neuromuscular junctions to prevent overexcitation of the locomotor circuit. Its function is as follows. Inhibits the activity of dissected pharyngeal myogenic muscle system. In terms of biological role, DPNFLRF-amide: Inhibits the activity of dissected pharyngeal myogenic muscle system. Functionally, acts as a ligand for the npr-22 receptor in vitro. This is FMRFamide-like neuropeptides 1 (flp-1) from Caenorhabditis elegans.